The following is a 642-amino-acid chain: Palmitoyltransferase akr1 (642 aa).

ANK repeat units follow at residues 1–29 (MGSL…DVNA), 33–62 (GGAT…DVNA), 67–96 (LQAA…DPLL), 100–129 (QGFN…SVDL), 133–162 (QQHT…DVLA), and 166–196 (DKMT…PCTA). At 1 to 256 (MGSLFLAASQ…SKFQFSQKTF (256 aa)) the chain is on the cytoplasmic side. Helical transmembrane passes span 257 to 277 (IIFC…IMSI) and 278 to 298 (CPMV…FKYI). The Cytoplasmic segment spans residues 299–316 (TTCIHANIDIVHFYLETP). The chain crosses the membrane as a helical span at residues 317 to 337 (FLAGIFSSIFFWVWCHSLLYI). Residues 338–343 (VPKTLP) are Lumenal-facing. The helical transmembrane segment at 344-364 (IKPLSSLLFVLISFTCIGLYV) threads the bilayer. Over 365–444 (RTAFQNPGYV…NCVGARNHRT (80 aa)) the chain is Cytoplasmic. In terms of domain architecture, DHHC spans 400–450 (HYCLKCFQVKPPRSYHCGACKRCINRYDHHCPWTGNCVGARNHRTFLLFVF). The S-palmitoyl cysteine intermediate role is filled by C430. The helical transmembrane segment at 445–465 (FLLFVFTLSTLIPIYFYVAFY) threads the bilayer. Residues 466-496 (YLQNIPIQKKYESYRCLFISGTICQWSLKDM) lie on the Lumenal side of the membrane. The helical transmembrane segment at 497-517 (FVLVASLTLFVNWCWVVVLAF) threads the bilayer. The Cytoplasmic portion of the chain corresponds to 518–642 (TQICQVAHNV…GRQDEATRHV (125 aa)).

This sequence belongs to the DHHC palmitoyltransferase family. AKR/ZDHHC17 subfamily.

Its subcellular location is the early endosome membrane. It localises to the golgi apparatus membrane. It carries out the reaction L-cysteinyl-[protein] + hexadecanoyl-CoA = S-hexadecanoyl-L-cysteinyl-[protein] + CoA. In terms of biological role, palmitoyltransferase specific for casein kinase 1. In Schizosaccharomyces pombe (strain 972 / ATCC 24843) (Fission yeast), this protein is Palmitoyltransferase akr1 (akr1).